A 262-amino-acid chain; its full sequence is MLVAAGQFAVTSVWEKNAEICASLMAQAAENDVSLFVLPEALLARDDHDADLSVKSAQLLEGEFLGRLRRESKRNMMTTILTIHVPSTPGRAWNMLVALQAGNIVARYAKLHLYDAFAIQESRRVDAGNEIAPLLEVEGMKVGLMTCYDLRFPELALAQALQGAEILVLPAAWVRGPLKEHHWSTLLAARALDTTCYMVAAGECGNKNIGQSRIIDPFGVTIAAASEMPALIMAEVTPERVRQVRAQLPVLNNRRFAPPQLL.

Positions 1 to 238 constitute a CN hydrolase domain; the sequence is MLVAAGQFAV…PALIMAEVTP (238 aa). Residue glutamate 40 is the Proton acceptor of the active site. The Proton donor role is filled by lysine 110. Cysteine 147 acts as the Nucleophile in catalysis.

This sequence belongs to the carbon-nitrogen hydrolase superfamily. NIT1/NIT2 family.

The catalysed reaction is N-(4-oxoglutaryl)-L-cysteinylglycine + H2O = L-cysteinylglycine + 2-oxoglutarate. Its function is as follows. Hydrolyzes deaminated glutathione (dGSH) to 2-oxoglutarate and L-cysteinylglycine, and no activity on glutathione or L-glutamine. May function as a metabolite repair enzyme. This chain is Deaminated glutathione amidase (ybeM), found in Escherichia coli O157:H7.